The chain runs to 481 residues: Cobyric acid synthase (481 aa).

The 188-residue stretch at 248 to 435 folds into the GATase cobBQ-type domain; it reads ALTVAWLAFS…LHGMFGSDRF (188 aa). Catalysis depends on Cys330, which acts as the Nucleophile. His427 is a catalytic residue.

Belongs to the CobB/CobQ family. CobQ subfamily.

It functions in the pathway cofactor biosynthesis; adenosylcobalamin biosynthesis. Functionally, catalyzes amidations at positions B, D, E, and G on adenosylcobyrinic A,C-diamide. NH(2) groups are provided by glutamine, and one molecule of ATP is hydrogenolyzed for each amidation. The chain is Cobyric acid synthase from Cereibacter sphaeroides (strain ATCC 17025 / ATH 2.4.3) (Rhodobacter sphaeroides).